The following is a 331-amino-acid chain: Fe-S cluster assembly protein DRE2 (331 aa).

Residues 1–146 (MSEILLLLHP…MPTFKKPVSS (146 aa)) form an N-terminal SAM-like domain region. The disordered stretch occupies residues 142–164 (KPVSSPVTLTDTSANNTDAEDDL). Polar residues predominate over residues 146–158 (SPVTLTDTSANNT). Residues 147–202 (PVTLTDTSANNTDAEDDLSMKRKLDSTKLAYFSDDSSGEEDDLIDENELIADSHKF) are linker. Cys212, Cys224, Cys227, and Cys229 together coordinate [2Fe-2S] cluster. Positions 212–229 (CELPNGKKRKKACKDCTC) are fe-S binding site A. [4Fe-4S] cluster is bound by residues Cys294, Cys297, Cys305, and Cys308. 2 short sequence motifs (cx2C motif) span residues 294–297 (CSSC) and 305–308 (CDGC). A fe-S binding site B region spans residues 294-308 (CSSCALGDAFRCDGC).

This sequence belongs to the anamorsin family. In terms of assembly, monomer. Interacts with TAH18. Interacts with MIA40. It depends on [2Fe-2S] cluster as a cofactor. The cofactor is [4Fe-4S] cluster.

It localises to the cytoplasm. The protein resides in the mitochondrion intermembrane space. In terms of biological role, component of the cytosolic iron-sulfur (Fe-S) protein assembly (CIA) machinery required for the maturation of extramitochondrial Fe-S proteins. Part of an electron transfer chain functioning in an early step of cytosolic Fe-S biogenesis, facilitating the de novo assembly of a [4Fe-4S] cluster on the scaffold complex CFD1-NBP35. Electrons are transferred to DRE2 from NADPH via the FAD- and FMN-containing protein TAH18. TAH18-DRE2 are also required for the assembly of the diferric tyrosyl radical cofactor of ribonucleotide reductase (RNR), probably by providing electrons for reduction during radical cofactor maturation in the catalytic small subunit RNR2. This Clavispora lusitaniae (strain ATCC 42720) (Yeast) protein is Fe-S cluster assembly protein DRE2.